Reading from the N-terminus, the 636-residue chain is Sodium-dependent nutrient amino acid transporter 1 (636 aa).

Positions 1–40 (MELKTMPQNGANNGNPQGNTSNNNNTNDSSNSNSNNNNKT) are disordered. Topologically, residues 1-50 (MELKTMPQNGANNGNPQGNTSNNNNTNDSSNSNSNNNNKTERTNWSNGLE) are cytoplasmic. A compositionally biased stretch (low complexity) spans 7-40 (PQNGANNGNPQGNTSNNNNTNDSSNSNSNNNNKT). Helical transmembrane passes span 51–71 (FLMS…FPFT), 78–98 (GAFL…MYYL), and 131–151 (TICI…YLAV). A glycan (N-linked (GlcNAc...) asparagine) is linked at Asn-184. Helical transmembrane passes span 225 to 245 (PDWK…LVIM), 254 to 274 (AAYF…GRAV), 303 to 323 (AVVQ…MFSS), 337 to 357 (IVTT…FAIL), 397 to 417 (LFSA…IVAL), 436 to 456 (VALV…TPGG), 469 to 489 (TYVV…IYGV), 511 to 531 (CWLI…MVTI), and 547 to 567 (VAGW…GWWY).

Belongs to the sodium:neurotransmitter symporter (SNF) (TC 2.A.22) family.

It is found in the membrane. Functionally, unusual broad substrate spectrum amino acid:sodium cotransporter that promotes absorption of the D isomers of essential amino acids. Neutral amino acids are the preferred substrates, especially methionine and phenylalanine. The polypeptide is Sodium-dependent nutrient amino acid transporter 1 (Drosophila grimshawi (Hawaiian fruit fly)).